The sequence spans 386 residues: Acyl-lipid omega-3 desaturase (cytochrome b5), endoplasmic reticulum (386 aa).

Residues 1-30 (MVVAMDQRTNVNGDPGAGDRKKEERFDPSA) form a disordered region. A compositionally biased stretch (basic and acidic residues) spans 17 to 27 (AGDRKKEERFD). The helical transmembrane segment at 63-83 (IIAVAALAIAAVYVDSWFLWP) threads the bilayer. Positions 101–105 (HDCGH) match the Histidine box-1 motif. The Histidine box-2 signature appears at 137-141 (HRTHH). 2 consecutive transmembrane segments (helical) span residues 220 to 240 (WSIM…LAVL) and 242 to 262 (VYGV…YLHH). Residues 304 to 308 (HVIHH) carry the Histidine box-3 motif.

The protein belongs to the fatty acid desaturase type 1 family. Abundant in leaves and seedlings. Barely detectable in root tissue.

It localises to the endoplasmic reticulum membrane. The catalysed reaction is a (9Z,12Z)-octadecadienoyl-containing glycerolipid + 2 Fe(II)-[cytochrome b5] + O2 + 2 H(+) = (9Z,12Z,15Z)-octadecatrienoyl-containing glycerolipid + 2 Fe(III)-[cytochrome b5] + 2 H2O. It participates in lipid metabolism; polyunsaturated fatty acid biosynthesis. In terms of biological role, microsomal (ER) omega-3 fatty acid desaturase introduces the third double bond in the biosynthesis of 18:3 fatty acids, important constituents of plant membranes. It is thought to use cytochrome b5 as an electron donor and to act on fatty acids esterified to phosphatidylcholine and, possibly, other phospholipids. This Arabidopsis thaliana (Mouse-ear cress) protein is Acyl-lipid omega-3 desaturase (cytochrome b5), endoplasmic reticulum.